The primary structure comprises 96 residues: Aspartyl/glutamyl-tRNA(Asn/Gln) amidotransferase subunit C (96 aa).

It belongs to the GatC family. Heterotrimer of A, B and C subunits.

It carries out the reaction L-glutamyl-tRNA(Gln) + L-glutamine + ATP + H2O = L-glutaminyl-tRNA(Gln) + L-glutamate + ADP + phosphate + H(+). The catalysed reaction is L-aspartyl-tRNA(Asn) + L-glutamine + ATP + H2O = L-asparaginyl-tRNA(Asn) + L-glutamate + ADP + phosphate + 2 H(+). Allows the formation of correctly charged Asn-tRNA(Asn) or Gln-tRNA(Gln) through the transamidation of misacylated Asp-tRNA(Asn) or Glu-tRNA(Gln) in organisms which lack either or both of asparaginyl-tRNA or glutaminyl-tRNA synthetases. The reaction takes place in the presence of glutamine and ATP through an activated phospho-Asp-tRNA(Asn) or phospho-Glu-tRNA(Gln). The sequence is that of Aspartyl/glutamyl-tRNA(Asn/Gln) amidotransferase subunit C from Sulfurovum sp. (strain NBC37-1).